Reading from the N-terminus, the 367-residue chain is Phosphoribosylaminoimidazole-succinocarboxamide synthase (367 aa).

It belongs to the SAICAR synthetase family.

The catalysed reaction is 5-amino-1-(5-phospho-D-ribosyl)imidazole-4-carboxylate + L-aspartate + ATP = (2S)-2-[5-amino-1-(5-phospho-beta-D-ribosyl)imidazole-4-carboxamido]succinate + ADP + phosphate + 2 H(+). The protein operates within purine metabolism; IMP biosynthesis via de novo pathway; 5-amino-1-(5-phospho-D-ribosyl)imidazole-4-carboxamide from 5-amino-1-(5-phospho-D-ribosyl)imidazole-4-carboxylate: step 1/2. The polypeptide is Phosphoribosylaminoimidazole-succinocarboxamide synthase (Aeromonas salmonicida (strain A449)).